We begin with the raw amino-acid sequence, 474 residues long: Kynureninase 2 (474 aa).

Residues L144, T145, 172 to 175 (FPSD), D258, H261, and Y283 each bind pyridoxal 5'-phosphate. At K284 the chain carries N6-(pyridoxal phosphate)lysine. W323 and T351 together coordinate pyridoxal 5'-phosphate.

The protein belongs to the kynureninase family. In terms of assembly, homodimer. Pyridoxal 5'-phosphate serves as cofactor.

The protein localises to the cytoplasm. The catalysed reaction is L-kynurenine + H2O = anthranilate + L-alanine + H(+). The enzyme catalyses 3-hydroxy-L-kynurenine + H2O = 3-hydroxyanthranilate + L-alanine + H(+). It functions in the pathway amino-acid degradation; L-kynurenine degradation; L-alanine and anthranilate from L-kynurenine: step 1/1. Its pathway is cofactor biosynthesis; NAD(+) biosynthesis; quinolinate from L-kynurenine: step 2/3. Catalyzes the cleavage of L-kynurenine (L-Kyn) and L-3-hydroxykynurenine (L-3OHKyn) into anthranilic acid (AA) and 3-hydroxyanthranilic acid (3-OHAA), respectively. This is Kynureninase 2 (bna5-2) from Emericella nidulans (strain FGSC A4 / ATCC 38163 / CBS 112.46 / NRRL 194 / M139) (Aspergillus nidulans).